The primary structure comprises 249 residues: Adenylate kinase (249 aa).

Residue 43-48 (GAGKGT) coordinates ATP. The NMP stretch occupies residues 63-92 (ATGDMLRAQVAAKSALGVEAKKIMDQGGLV). AMP-binding positions include Thr64, Arg69, 90-92 (GLV), 119-122 (GFPR), and Gln126. The tract at residues 160 to 197 (GRLVHPASGRSYHKLFNPPKKDMIDDVSGDALVQRSDD) is LID. ATP is bound by residues Arg161 and 170–171 (SY). Residues Arg194 and Arg205 each contribute to the AMP site. Position 233 (Gln233) interacts with ATP.

This sequence belongs to the adenylate kinase family. AK2 subfamily. Monomer.

It is found in the cytoplasm. It localises to the cytosol. The protein localises to the mitochondrion intermembrane space. It catalyses the reaction AMP + ATP = 2 ADP. Functionally, catalyzes the reversible transfer of the terminal phosphate group between ATP and AMP. Plays an important role in cellular energy homeostasis and in adenine nucleotide metabolism. Adenylate kinase activity is critical for regulation of the phosphate utilization and the AMP de novo biosynthesis pathways. This is Adenylate kinase from Debaryomyces hansenii (strain ATCC 36239 / CBS 767 / BCRC 21394 / JCM 1990 / NBRC 0083 / IGC 2968) (Yeast).